The primary structure comprises 551 residues: PA-phosphatase related-family protein DDB_G0268928 (551 aa).

2 stretches are compositionally biased toward polar residues: residues 26–47 and 137–152; these read TESLSDIDSQTDINNTGNSGKD and KYNTRNSGTLRNSSNK. 2 disordered regions span residues 26 to 50 and 123 to 172; these read TESLSDIDSQTDINNTGNSGKDYSS and KGED…NNNN. Positions 153–171 are enriched in low complexity; that stretch reads TQTTVLNNSTTSSNNINNN. The next 7 membrane-spanning stretches (helical) occupy residues 211 to 231, 232 to 252, 273 to 293, 346 to 366, 393 to 413, 474 to 494, and 500 to 520; these read SYSDATFSILSGVVILFSIIY, SLLVGPIQIMFAFLVSILVFI, LAVGLGLTIPSFFAATGAVVL, ILQLSYISYYIWGYFMEIYIL, MFICSWISTYFIVFSINLIFP, ILPAYGFVSTIAAILIAIATM, and YFVDFLAALPVTIFCLLYGGF.

The protein belongs to the PA-phosphatase related phosphoesterase family.

Its subcellular location is the membrane. The polypeptide is PA-phosphatase related-family protein DDB_G0268928 (Dictyostelium discoideum (Social amoeba)).